Consider the following 610-residue polypeptide: UvrABC system protein C (610 aa).

Residues 13 to 91 enclose the GIY-YIG domain; sequence HLPGVYRMYD…IKENQPKYNV (79 aa). Residues 201–236 enclose the UVR domain; it reads GQVIEHLVQKMENAAQELDFEAAARFRDQIQSVRAV.

The protein belongs to the UvrC family. Interacts with UvrB in an incision complex.

The protein localises to the cytoplasm. In terms of biological role, the UvrABC repair system catalyzes the recognition and processing of DNA lesions. UvrC both incises the 5' and 3' sides of the lesion. The N-terminal half is responsible for the 3' incision and the C-terminal half is responsible for the 5' incision. The chain is UvrABC system protein C from Actinobacillus pleuropneumoniae serotype 3 (strain JL03).